The following is a 272-amino-acid chain: Shikimate dehydrogenase (NADP(+)) (272 aa).

Residues 14-16 (SKS) and T61 each bind shikimate. The active-site Proton acceptor is the K65. An NADP(+)-binding site is contributed by E77. N86 and D102 together coordinate shikimate. NADP(+) contacts are provided by residues 126-130 (GAGGA), 149-154 (NRTVSR), and M213. Y215 is a shikimate binding site. Residue G237 participates in NADP(+) binding.

This sequence belongs to the shikimate dehydrogenase family. In terms of assembly, homodimer.

The catalysed reaction is shikimate + NADP(+) = 3-dehydroshikimate + NADPH + H(+). It participates in metabolic intermediate biosynthesis; chorismate biosynthesis; chorismate from D-erythrose 4-phosphate and phosphoenolpyruvate: step 4/7. In terms of biological role, involved in the biosynthesis of the chorismate, which leads to the biosynthesis of aromatic amino acids. Catalyzes the reversible NADPH linked reduction of 3-dehydroshikimate (DHSA) to yield shikimate (SA). The polypeptide is Shikimate dehydrogenase (NADP(+)) (Shigella flexneri).